The primary structure comprises 552 residues: Glutamyl-tRNA reductase 1, chloroplastic (552 aa).

Substrate-binding positions include 150 to 153, serine 210, 215 to 217, and glutamine 221; these read TCNR and EGQ. The Nucleophile role is filled by cysteine 151. 292 to 297 serves as a coordination point for NADP(+); that stretch reads GAGKMG.

It belongs to the glutamyl-tRNA reductase family. As to expression, primarily in cotyledons and hypocotyls of greening cucumber seedlings.

The protein resides in the plastid. Its subcellular location is the chloroplast. The enzyme catalyses (S)-4-amino-5-oxopentanoate + tRNA(Glu) + NADP(+) = L-glutamyl-tRNA(Glu) + NADPH + H(+). It participates in porphyrin-containing compound metabolism; protoporphyrin-IX biosynthesis; 5-aminolevulinate from L-glutamyl-tRNA(Glu): step 1/2. Functionally, catalyzes the NADPH-dependent reduction of glutamyl-tRNA(Glu) to glutamate 1-semialdehyde (GSA). The chain is Glutamyl-tRNA reductase 1, chloroplastic (HEMA1) from Cucumis sativus (Cucumber).